Reading from the N-terminus, the 360-residue chain is UDP-N-acetylglucosamine--N-acetylmuramyl-(pentapeptide) pyrophosphoryl-undecaprenol N-acetylglucosamine transferase (360 aa).

UDP-N-acetyl-alpha-D-glucosamine-binding positions include 11-13 (TGG), N120, R161, S188, and Q282.

This sequence belongs to the glycosyltransferase 28 family. MurG subfamily.

Its subcellular location is the cell inner membrane. The enzyme catalyses di-trans,octa-cis-undecaprenyl diphospho-N-acetyl-alpha-D-muramoyl-L-alanyl-D-glutamyl-meso-2,6-diaminopimeloyl-D-alanyl-D-alanine + UDP-N-acetyl-alpha-D-glucosamine = di-trans,octa-cis-undecaprenyl diphospho-[N-acetyl-alpha-D-glucosaminyl-(1-&gt;4)]-N-acetyl-alpha-D-muramoyl-L-alanyl-D-glutamyl-meso-2,6-diaminopimeloyl-D-alanyl-D-alanine + UDP + H(+). It functions in the pathway cell wall biogenesis; peptidoglycan biosynthesis. In terms of biological role, cell wall formation. Catalyzes the transfer of a GlcNAc subunit on undecaprenyl-pyrophosphoryl-MurNAc-pentapeptide (lipid intermediate I) to form undecaprenyl-pyrophosphoryl-MurNAc-(pentapeptide)GlcNAc (lipid intermediate II). This chain is UDP-N-acetylglucosamine--N-acetylmuramyl-(pentapeptide) pyrophosphoryl-undecaprenol N-acetylglucosamine transferase, found in Synechococcus sp. (strain RCC307).